The sequence spans 763 residues: Disintegrin and metalloproteinase domain-containing protein 29 (763 aa).

Positions M1–A31 are cleaved as a signal peptide. The propeptide occupies G32–W200. N-linked (GlcNAc...) asparagine glycans are attached at residues N164, N177, and N223. Residues W201 to Y684 are Extracellular-facing. The 192-residue stretch at K205–Y396 folds into the Peptidase M12B domain. 3 cysteine pairs are disulfide-bonded: C313/C390, C353/C375, and C355/C360. N374, N424, N434, N475, and N584 each carry an N-linked (GlcNAc...) asparagine glycan. The Disintegrin domain occupies R403–D489. Residues C461 and C481 are joined by a disulfide bond. Intrachain disulfides connect C631/C642, C636/C648, and C650/C659. The EGF-like domain occupies C631 to M660. A helical transmembrane segment spans residues L685–F705. At N706–N763 the chain is on the cytoplasmic side. Residues R712–N763 form a disordered region. The segment covering R751–N763 has biased composition (polar residues).

It is found in the membrane. Functionally, may be involved in spermatogenesis and fertilization. Seems to be a non catalytic metalloprotease-like protein. The sequence is that of Disintegrin and metalloproteinase domain-containing protein 29 (Adam29) from Mus musculus (Mouse).